Here is a 256-residue protein sequence, read N- to C-terminus: uncharacterized protein (256 aa).

The next 2 helical transmembrane spans lie at 155–175 (ITGM…GLWL) and 203–223 (ITTT…YLLI).

It localises to the cell membrane. This is an uncharacterized protein from Mycobacterium bovis (strain ATCC BAA-935 / AF2122/97).